Here is a 345-residue protein sequence, read N- to C-terminus: Phenylalanine--tRNA ligase alpha subunit (345 aa).

A Mg(2+)-binding site is contributed by glutamate 266.

This sequence belongs to the class-II aminoacyl-tRNA synthetase family. Phe-tRNA synthetase alpha subunit type 1 subfamily. Tetramer of two alpha and two beta subunits. Mg(2+) serves as cofactor.

The protein resides in the cytoplasm. The catalysed reaction is tRNA(Phe) + L-phenylalanine + ATP = L-phenylalanyl-tRNA(Phe) + AMP + diphosphate + H(+). In Methylibium petroleiphilum (strain ATCC BAA-1232 / LMG 22953 / PM1), this protein is Phenylalanine--tRNA ligase alpha subunit.